A 478-amino-acid chain; its full sequence is Cytochrome c-552 (478 aa).

Positions 1–27 are cleaved as a signal peptide; the sequence is MKKQWTRRSAAAIAMVTTLLLSSHSFA. Residue histidine 91 participates in heme c binding. 3 residues coordinate heme: cysteine 119, cysteine 122, and lysine 123. Cysteine 157, cysteine 160, histidine 161, cysteine 206, cysteine 209, and histidine 210 together coordinate heme c. Residues glutamate 212, tyrosine 213, lysine 258, and glutamine 260 each contribute to the Ca(2+) site. A substrate-binding site is contributed by tyrosine 213. Histidine 261 serves as a coordination point for substrate. Heme c contacts are provided by histidine 272, cysteine 279, cysteine 282, histidine 283, histidine 298, cysteine 311, cysteine 314, histidine 315, and histidine 390.

The protein belongs to the cytochrome c-552 family. It depends on Ca(2+) as a cofactor. The cofactor is heme c.

It localises to the periplasm. The enzyme catalyses 6 Fe(III)-[cytochrome c] + NH4(+) + 2 H2O = 6 Fe(II)-[cytochrome c] + nitrite + 8 H(+). It functions in the pathway nitrogen metabolism; nitrate reduction (assimilation). In terms of biological role, catalyzes the reduction of nitrite to ammonia, consuming six electrons in the process. The sequence is that of Cytochrome c-552 from Aliivibrio salmonicida (strain LFI1238) (Vibrio salmonicida (strain LFI1238)).